Here is a 470-residue protein sequence, read N- to C-terminus: Serine hydroxymethyltransferase 5 (470 aa).

Position 244 is an N6-(pyridoxal phosphate)lysine (lysine 244).

It belongs to the SHMT family. In terms of assembly, homotetramer. Pyridoxal 5'-phosphate serves as cofactor.

It localises to the cytoplasm. It catalyses the reaction (6R)-5,10-methylene-5,6,7,8-tetrahydrofolate + glycine + H2O = (6S)-5,6,7,8-tetrahydrofolate + L-serine. It participates in one-carbon metabolism; tetrahydrofolate interconversion. Functionally, catalyzes the interconversion of serine and glycine. In Arabidopsis thaliana (Mouse-ear cress), this protein is Serine hydroxymethyltransferase 5 (SHM5).